A 130-amino-acid polypeptide reads, in one-letter code: Small ribosomal subunit protein uS8 (130 aa).

The protein belongs to the universal ribosomal protein uS8 family. As to quaternary structure, part of the 30S ribosomal subunit. Contacts proteins S5 and S12.

One of the primary rRNA binding proteins, it binds directly to 16S rRNA central domain where it helps coordinate assembly of the platform of the 30S subunit. The sequence is that of Small ribosomal subunit protein uS8 from Marinomonas sp. (strain MWYL1).